The primary structure comprises 229 residues: MGVQHLLKLRMASPHPHPHPGAPLAARPLSALASFFLARPSSTAAAPPPRHVTLSCSRPHCNHNQWAASRCRGTAGRRRLQVVVAMSSSAPPPPPGSVQKSEEEWEAILSPEQFRILRLKGTEYPGTGEYDKLFAEGVYECAGCGTPLYKSSTKFNSGCGWPAFYEGFPGAIARTPDPDGRRIEITCAACGGHLGHVFKGEGFNTPTDERHCVNSISLKFIPASEDSKL.

The N-terminal 71 residues, 1 to 71, are a transit peptide targeting the chloroplast; that stretch reads MGVQHLLKLR…NHNQWAASRC (71 aa). Residues 102–223 form the MsrB domain; sequence EEEWEAILSP…NSISLKFIPA (122 aa). Zn(2+) is bound by residues Cys-141, Cys-144, Cys-187, and Cys-190. The cysteines at positions 159 and 212 are disulfide-linked. Cys-212 functions as the Nucleophile in the catalytic mechanism.

Belongs to the MsrB Met sulfoxide reductase family. Requires Zn(2+) as cofactor.

It is found in the plastid. It localises to the chloroplast. The enzyme catalyses L-methionyl-[protein] + [thioredoxin]-disulfide + H2O = L-methionyl-(R)-S-oxide-[protein] + [thioredoxin]-dithiol. In terms of biological role, catalyzes the reduction of methionine sulfoxide (MetSO) to methionine in proteins. Plays a protective role against oxidative stress by restoring activity to proteins that have been inactivated by methionine oxidation. MSRB family specifically reduces the MetSO R-enantiomer. The protein is Peptide methionine sulfoxide reductase B3, chloroplastic (MSRB3) of Oryza sativa subsp. japonica (Rice).